A 152-amino-acid polypeptide reads, in one-letter code: Aspartate carbamoyltransferase regulatory chain (152 aa).

Positions 108, 113, 137, and 140 each coordinate Zn(2+).

The protein belongs to the PyrI family. In terms of assembly, contains catalytic and regulatory chains. Requires Zn(2+) as cofactor.

Its function is as follows. Involved in allosteric regulation of aspartate carbamoyltransferase. The sequence is that of Aspartate carbamoyltransferase regulatory chain from Neisseria meningitidis serogroup B (strain ATCC BAA-335 / MC58).